The chain runs to 848 residues: Adenylate cyclase (848 aa).

The interval 1 to 535 is catalytic; sequence MYLYIETLKQ…DVSHHFPLRL (535 aa). Residues 541 to 848 form a regulatory region; that stretch reads KALYSPCEIR…DTPLLQQYFS (308 aa). At histidine 609 the chain carries Phosphohistidine; by CRR.

The protein belongs to the adenylyl cyclase class-1 family.

It localises to the cytoplasm. It carries out the reaction ATP = 3',5'-cyclic AMP + diphosphate. Its activity is regulated as follows. The regulatory domain is involved in the regulation of cyclase activity by the carbon source. Activated by the PTS system, glucose-specific IIA component (CRR). In terms of biological role, catalyzes the formation of the second messenger cAMP from ATP. Its transcript is probably degraded by endoribonuclease LS (rnlA), decreasing cAMP levels and the negative regulator Crp-cAMP, which then induces its own transcription again. This chain is Adenylate cyclase (cyaA), found in Escherichia coli (strain K12).